Consider the following 439-residue polypeptide: Ribulose bisphosphate carboxylase/oxygenase activase, chloroplastic (439 aa).

Residue 167–174 (GGKGQGKS) participates in ATP binding.

This sequence belongs to the RuBisCO activase family.

The protein resides in the plastid. It is found in the chloroplast stroma. Activation of RuBisCO (ribulose-1,5-bisphosphate carboxylase/oxygenase; EC 4.1.1.39) involves the ATP-dependent carboxylation of the epsilon-amino group of lysine leading to a carbamate structure. The polypeptide is Ribulose bisphosphate carboxylase/oxygenase activase, chloroplastic (RCA) (Vigna radiata var. radiata (Mung bean)).